A 132-amino-acid chain; its full sequence is D-ribose pyranase (132 aa).

His20 acts as the Proton donor in catalysis. Substrate contacts are provided by residues Asp28, His99, and 121–123 (YSN).

The protein belongs to the RbsD / FucU family. RbsD subfamily. As to quaternary structure, homodecamer.

The protein localises to the cytoplasm. It catalyses the reaction beta-D-ribopyranose = beta-D-ribofuranose. Its pathway is carbohydrate metabolism; D-ribose degradation; D-ribose 5-phosphate from beta-D-ribopyranose: step 1/2. Functionally, catalyzes the interconversion of beta-pyran and beta-furan forms of D-ribose. In Streptococcus uberis (strain ATCC BAA-854 / 0140J), this protein is D-ribose pyranase.